Reading from the N-terminus, the 536-residue chain is Adenine deaminase (536 aa).

Positions 1–24 are disordered; it reads MTPSPHDLLHCGMNSQDRDETNGD.

Belongs to the metallo-dependent hydrolases superfamily. Adenine deaminase family. Mn(2+) is required as a cofactor.

It catalyses the reaction adenine + H2O + H(+) = hypoxanthine + NH4(+). The protein is Adenine deaminase of Deinococcus radiodurans (strain ATCC 13939 / DSM 20539 / JCM 16871 / CCUG 27074 / LMG 4051 / NBRC 15346 / NCIMB 9279 / VKM B-1422 / R1).